Here is a 477-residue protein sequence, read N- to C-terminus: Tripartite motif-containing protein 72 (477 aa).

Positions 14, 17, 29, 31, 34, 37, 53, 56, 86, 89, 97, 100, 105, 108, 114, and 117 each coordinate Zn(2+). Residues 16–59 (CPLCLELFRAPVTPECGHTFCQGCLTGAPKNQDQNGSTPCPTCQ) form an RING-type zinc finger. Residues 83 to 124 (VPKGHCLEHLDPLSVYCEQDKELICGVCASLGKHKGHNIITA) form a B box-type zinc finger. Residues 135–232 (LPQQQVILQE…QMDGVLKDVE (98 aa)) are a coiled coil. In terms of domain architecture, B30.2/SPRY spans 272–476 (DEFKFQVWRK…LKIFYPPAEQ (205 aa)).

Belongs to the TRIM/RBCC family. In terms of assembly, homodimer. Homooligomer; disulfide-linked. Oligomerizes on the phospholipid membrane. In terms of processing, disulfide bond formation at Cys-244 occurs in case of membrane damage that cause the entry of the oxidized milieu of the extracellular space, resulting in homooligomerization.

It is found in the cell membrane. Its subcellular location is the sarcolemma. It localises to the cytoplasmic vesicle membrane. The catalysed reaction is S-ubiquitinyl-[E2 ubiquitin-conjugating enzyme]-L-cysteine + [acceptor protein]-L-lysine = [E2 ubiquitin-conjugating enzyme]-L-cysteine + N(6)-ubiquitinyl-[acceptor protein]-L-lysine.. The protein operates within protein modification; protein ubiquitination. With respect to regulation, specifically binds phosphatidylserine. The binding to phospholipids enhances ubiquitination activity. Muscle-specific E3 ubiquitin-protein ligase that plays a central role in cell membrane repair by nucleating the assembly of the repair machinery at injury sites. Acts as a sensor of oxidation: upon membrane damage, entry of extracellular oxidative environment results in disulfide bond formation and homooligomerization at the injury site. This oligomerization acts as a nucleation site for recruitment of TRIM72-containing vesicles to the injury site, leading to membrane patch formation. Probably acts upstream of the Ca(2+)-dependent membrane resealing process. Required for transport of DYSF to sites of cell injury during repair patch formation. Regulates membrane budding and exocytosis. May be involved in the regulation of the mobility of KCNB1-containing endocytic vesicles. This Xenopus tropicalis (Western clawed frog) protein is Tripartite motif-containing protein 72 (trim72).